A 392-amino-acid polypeptide reads, in one-letter code: S-adenosylmethionine synthase (392 aa).

H17 contacts ATP. Position 19 (D19) interacts with Mg(2+). A K(+)-binding site is contributed by E45. Residues E58 and Q102 each coordinate L-methionine. The tract at residues 102–112 (QSADIAQGVDA) is flexible loop. Residues 169–171 (DAK), 235–236 (KF), D244, 250–251 (RK), A267, and K271 contribute to the ATP site. Residue D244 participates in L-methionine binding. K275 contacts L-methionine.

The protein belongs to the AdoMet synthase family. Homotetramer; dimer of dimers. Mg(2+) serves as cofactor. K(+) is required as a cofactor.

It is found in the cytoplasm. The enzyme catalyses L-methionine + ATP + H2O = S-adenosyl-L-methionine + phosphate + diphosphate. Its pathway is amino-acid biosynthesis; S-adenosyl-L-methionine biosynthesis; S-adenosyl-L-methionine from L-methionine: step 1/1. Catalyzes the formation of S-adenosylmethionine (AdoMet) from methionine and ATP. The overall synthetic reaction is composed of two sequential steps, AdoMet formation and the subsequent tripolyphosphate hydrolysis which occurs prior to release of AdoMet from the enzyme. This Methylobacterium nodulans (strain LMG 21967 / CNCM I-2342 / ORS 2060) protein is S-adenosylmethionine synthase.